We begin with the raw amino-acid sequence, 127 residues long: Flagellar assembly factor FliW (127 aa).

Belongs to the FliW family. Interacts with translational regulator CsrA and flagellin(s).

It localises to the cytoplasm. In terms of biological role, acts as an anti-CsrA protein, binds CsrA and prevents it from repressing translation of its target genes, one of which is flagellin. Binds to flagellin and participates in the assembly of the flagellum. In Campylobacter concisus (strain 13826), this protein is Flagellar assembly factor FliW.